We begin with the raw amino-acid sequence, 801 residues long: Leucine--tRNA ligase (801 aa).

A 'HIGH' region motif is present at residues 39 to 50 (PYPSGAGIHVGH). The 'KMSKS' region signature appears at 578–582 (KMSKS). ATP is bound at residue lysine 581.

Belongs to the class-I aminoacyl-tRNA synthetase family.

The protein resides in the cytoplasm. It carries out the reaction tRNA(Leu) + L-leucine + ATP = L-leucyl-tRNA(Leu) + AMP + diphosphate. The sequence is that of Leucine--tRNA ligase from Mesoplasma florum (strain ATCC 33453 / NBRC 100688 / NCTC 11704 / L1) (Acholeplasma florum).